The following is a 142-amino-acid chain: Large ribosomal subunit protein uL11 (142 aa).

It belongs to the universal ribosomal protein uL11 family. In terms of assembly, part of the ribosomal stalk of the 50S ribosomal subunit. Interacts with L10 and the large rRNA to form the base of the stalk. L10 forms an elongated spine to which L12 dimers bind in a sequential fashion forming a multimeric L10(L12)X complex. One or more lysine residues are methylated.

Functionally, forms part of the ribosomal stalk which helps the ribosome interact with GTP-bound translation factors. In Vibrio campbellii (strain ATCC BAA-1116), this protein is Large ribosomal subunit protein uL11.